The chain runs to 246 residues: Aquaporin AqpM (246 aa).

Residues 1-11 (MVSLTKRCIAE) are Cytoplasmic-facing. Residues 12–32 (FIGTFILVFFGAGSAAVTLMI) traverse the membrane as a helical segment. Residues 33 to 55 (ASGGTSPNPFNIGIGLLGGLGDW) lie on the Extracellular side of the membrane. The chain crosses the membrane as a helical span at residues 56–76 (VAIGLAFGFAIAASIYALGNI). At 77-103 (SGCHINPAVTIGLWSVKKFPGREVVPY) the chain is on the cytoplasmic side. The NPA 1 signature appears at 82–84 (NPA). Residues 104–124 (IIAQLLGAAFGSFIFLQCAGI) traverse the membrane as a helical segment. Residues 125 to 145 (GAATVGGLGATAPFPGISYWQ) lie on the Extracellular side of the membrane. A helical transmembrane segment spans residues 146-166 (AMLAEVVGTFLLMITIMGIAV). Over 167–172 (DERAPK) the chain is Cytoplasmic. Residues 173-193 (GFAGIIIGLTVAGIITTLGNI) form a helical membrane-spanning segment. The Extracellular segment spans residues 194 to 217 (SGSSLNPARTFGPYLNDMIFAGTN). Positions 199-201 (NPA) match the NPA 2 motif. Residues 218-238 (LWNYYPIYVIGPIVGAVLAAL) form a helical membrane-spanning segment. The Cytoplasmic portion of the chain corresponds to 239–246 (TYQYLTSE).

It belongs to the MIP/aquaporin (TC 1.A.8) family. As to quaternary structure, homotetramer.

Its subcellular location is the cell membrane. In terms of biological role, channel that permits osmotically driven movement of water in both directions. It mediates rapid entry or exit of water in response to abrupt changes in osmolarity. Also exhibits a transient but reproducible increase in the initial glycerol flux. This Methanothermobacter marburgensis (strain ATCC BAA-927 / DSM 2133 / JCM 14651 / NBRC 100331 / OCM 82 / Marburg) (Methanobacterium thermoautotrophicum) protein is Aquaporin AqpM (aqpM).